Here is a 399-residue protein sequence, read N- to C-terminus: Bombesin receptor subtype-3 (399 aa).

The Extracellular segment spans residues 1–41 (MSQRQPQSPNQTLISITNDTETSSSAVSNDTTPKGWTGDNS). N-linked (GlcNAc...) asparagine glycans are attached at residues N10, N18, and N29. The helical transmembrane segment at 42 to 63 (PGIEALCAIYITYAVIISVGIL) threads the bilayer. The Cytoplasmic portion of the chain corresponds to 64–82 (GNAILIKVFFKTKSMQTVP). The helical transmembrane segment at 83-103 (NIFITSLAFGDLLLLLTCVPV) threads the bilayer. The Extracellular segment spans residues 104-121 (DATHYLAEGWLFGKVGCK). The cysteines at positions 120 and 203 are disulfide-linked. The helical transmembrane segment at 122–143 (VLSFIRLTSVGVSVFTLTILSA) threads the bilayer. Over 144-163 (DRYKAVVKPLERQPSNAILK) the chain is Cytoplasmic. The chain crosses the membrane as a helical span at residues 164–184 (TCAKAGGIWIMAMIFALPEAI). The Extracellular portion of the chain corresponds to 185-220 (FSNVYTFQDPNRNVTFESCNSYPISERLLQEIHSLL). The helical transmembrane segment at 221–241 (CFLVFYIIPLSIISVYYSLIA) threads the bilayer. The Cytoplasmic portion of the chain corresponds to 242–272 (RTLYKSTLNIPTEEQSHARKQIESRKRIAKT). The chain crosses the membrane as a helical span at residues 273-293 (VLVLVALFALCWLPNHLLYLY). At 294 to 313 (HSFTYESYAEPSDVPFVVTI) the chain is on the extracellular side. The chain crosses the membrane as a helical span at residues 314–333 (FSRVLAFSNSCVNPFALYWL). At 334–399 (SKTFQKHFKA…STAKKGEDKV (66 aa)) the chain is on the cytoplasmic side. C347 carries the S-palmitoyl cysteine lipid modification.

Belongs to the G-protein coupled receptor 1 family. As to quaternary structure, interacts with C6orf89.

The protein localises to the cell membrane. Its function is as follows. Role in sperm cell division, maturation, or function. This receptor mediates its action by association with G proteins that activate a phosphatidylinositol-calcium second messenger system. In Rattus norvegicus (Rat), this protein is Bombesin receptor subtype-3 (Brs3).